A 348-amino-acid chain; its full sequence is Oxidase ucsJ (348 aa).

Belongs to the avfA family.

It participates in mycotoxin biosynthesis. Functionally, oxidase; part of the gene cluster that mediates the biosynthesis of UCS1025A, a member of the pyrrolizidinone family that acts as a strong telomerase inhibitor and displays potent antibacterial and antitumor properties. These compounds share a hemiaminal-containing pyrrolizidinone core fused with a gamma-lactone, giving a furopyrrolizidine that is connected to a decalin fragment. The polyketide synthase module (PKS) of the PKS-NRPS ucsA is responsible for the synthesis of the polyketide backbone via the condensation of an acetyl-CoA starter unit with 6 malonyl-CoA units. The downstream nonribosomal peptide synthetase (NRPS) module then amidates the carboxyl end of the polyketide with a 2S,3S-methylproline derived from L-isoleucine by the 2-oxoglutarate-dependent dioxygenase ucsF which converts L-isoleucine to (4S,5S)-4-methylpyrroline-5-carboxylate that is further converted to 2S,3S-methylproline by the pyrroline-5-carboxylate reductase ucsG. Reductive release of the completed aminoacyl polyketide from the assembly line can form the 3-pyrrolin-2-one structure via an intramolecular Knoevenagel reaction. Because ucsA lacks a designated enoylreductase (ER) domain, the required activity is provided the enoyl reductase ucsL. This keto acyclic precursor is the substrate of the Diels-Alderase ucsH, that catalyzes the Diels-Alder cycloaddition. Oxidation of the 3S-methyl group to a carboxylate by the cytochrome P450 monooxygenase ucsK allows an oxa-Michael cyclization that might involve the reductase/dehydrogenase ucsI and which furnishes the furopyrrolizidine. The oxidase ucsJ likely plays a critical role in stereoselective reduction of the C5-C6 double bond to afford the required R-configured carboxylate group. Further enolization and oxidation at C5 by an unidentified enzyme affords the last intermediate that can undergo oxa-Michael cyclization to yield UCS1025A. The protein is Oxidase ucsJ of Acremonium sp.